The primary structure comprises 337 residues: Glyceraldehyde-3-phosphate dehydrogenase 2, cytosolic (337 aa).

A binding to NAD region spans residues 1–151 (MGKIKIGING…YTSDVNIVSN (151 aa)). NAD(+) is bound by residues 13 to 14 (RI), aspartate 35, and arginine 82. The interval 152–337 (ASCTTNCLAP…DLIRHMFKTQ (186 aa)) is catalytic. D-glyceraldehyde 3-phosphate is bound by residues 153–155 (SCT), threonine 184, 213–214 (TG), and arginine 236. The Nucleophile role is filled by cysteine 154. Asparagine 318 is an NAD(+) binding site.

Belongs to the glyceraldehyde-3-phosphate dehydrogenase family. In terms of assembly, homotetramer. As to expression, developing seeds, seedling roots and shoots, and embryo.

The protein localises to the cytoplasm. The enzyme catalyses D-glyceraldehyde 3-phosphate + phosphate + NAD(+) = (2R)-3-phospho-glyceroyl phosphate + NADH + H(+). The protein operates within carbohydrate degradation; glycolysis; pyruvate from D-glyceraldehyde 3-phosphate: step 1/5. In terms of biological role, key enzyme in glycolysis that catalyzes the first step of the pathway by converting D-glyceraldehyde 3-phosphate (G3P) into 3-phospho-D-glyceroyl phosphate. Essential for the maintenance of cellular ATP levels and carbohydrate metabolism. The protein is Glyceraldehyde-3-phosphate dehydrogenase 2, cytosolic (GAPC2) of Zea mays (Maize).